The primary structure comprises 79 residues: Cell division protein ZapB (79 aa).

Residues Leu-3–Val-79 are a coiled coil.

Belongs to the ZapB family. Homodimer. The ends of the coiled-coil dimer bind to each other, forming polymers. Interacts with FtsZ.

It is found in the cytoplasm. Non-essential, abundant cell division factor that is required for proper Z-ring formation. It is recruited early to the divisome by direct interaction with FtsZ, stimulating Z-ring assembly and thereby promoting cell division earlier in the cell cycle. Its recruitment to the Z-ring requires functional FtsA or ZipA. This chain is Cell division protein ZapB, found in Salmonella typhi.